The primary structure comprises 92 residues: LYR motif-containing protein 4 homolog (92 aa).

The stretch at Ala40–Val68 forms a coiled coil.

The protein belongs to the complex I LYR family. As to quaternary structure, component of the mitochondrial core iron-sulfur cluster (ISC) assembly complex at least composed of the cysteine desulfurase Nfs1, the scaffold protein IscU, the accessory protein bcn92/Isd11/Lyrm4, and probably fh/frataxin. Interacts with Nfs1.

It is found in the mitochondrion. Its function is as follows. Stabilizing factor of the core iron-sulfur cluster (ISC) assembly complex that regulates the stability and cysteine desulfurase activity of Nfs1 and participates in the [2Fe-2S] clusters assembly on the scaffolding protein IscU. The polypeptide is LYR motif-containing protein 4 homolog (Drosophila subobscura (Fruit fly)).